A 69-amino-acid polypeptide reads, in one-letter code: Conotoxin reg3.6 (69 aa).

The signal sequence occupies residues 1 to 20 (MMSKLGVLLTICLLLFPLSA). The propeptide occupies 21–52 (LPLDGDQPADQPAERVQDISPDQNPLFHLVKR). Disulfide bonds link Cys-54/Cys-68, Cys-55/Cys-66, and Cys-60/Cys-69.

Belongs to the conotoxin M superfamily. In terms of tissue distribution, expressed by the venom duct.

It is found in the secreted. This chain is Conotoxin reg3.6, found in Conus regius (Crown cone).